Consider the following 379-residue polypeptide: SUN domain-containing protein 5 (379 aa).

The disordered stretch occupies residues 1–45; sequence MPRSSRSPGDPGALLEDVAHNPRPRRIAQRGRNTSRMAEDTSPNM. Over 1 to 105 the chain is Nuclear; sequence MPRSSRSPGD…LLCQKLMEKT (105 aa). Polar residues predominate over residues 31–45; the sequence is GRNTSRMAEDTSPNM. The helical transmembrane segment at 106-122 threads the bilayer; the sequence is GILLLCAFGFWMFSIHL. Residues 123-379 lie on the Perinuclear space side of the membrane; that stretch reads PSKMKVWQDD…PHQNPYPKRD (257 aa). Residues 141 to 182 are a coiled coil; the sequence is LRLYQEKVRHHSGEIQDLRGSMNQLIAKLQEMEAMSDEQKMA. The SUN domain occupies 205–364; the sequence is GASIDFEHTS…YRVRVHGSVA (160 aa).

In terms of assembly, probable homotrimer. Interacts with DNAJB13. Highly glycosylated in the Golgi apparatus during spermiogenesis. Sperm (at protein level). Widely expressed. Conflictingly shown to be specifically expressed in testis.

The protein resides in the nucleus inner membrane. It is found in the golgi apparatus. In terms of biological role, plays an essential role in anchoring sperm head to the tail. Is responsible for the attachment of the coupling apparatus to the sperm nuclear envelope. The protein is SUN domain-containing protein 5 (SUN5) of Homo sapiens (Human).